The following is a 399-amino-acid chain: Tyrosine--tRNA ligase (399 aa).

The short motif at 44 to 53 (PTAPDLHLGH) is the 'HIGH' region element. The 'KMSKS' region signature appears at 229–233 (KMSKS). Lys232 contributes to the ATP binding site. Residues 338-398 (ISITKALVDC…GKRKFAKLKV (61 aa)) form the S4 RNA-binding domain.

This sequence belongs to the class-I aminoacyl-tRNA synthetase family. TyrS type 2 subfamily. In terms of assembly, homodimer.

The protein resides in the cytoplasm. The enzyme catalyses tRNA(Tyr) + L-tyrosine + ATP = L-tyrosyl-tRNA(Tyr) + AMP + diphosphate + H(+). Functionally, catalyzes the attachment of tyrosine to tRNA(Tyr) in a two-step reaction: tyrosine is first activated by ATP to form Tyr-AMP and then transferred to the acceptor end of tRNA(Tyr). The polypeptide is Tyrosine--tRNA ligase (Sulfurimonas denitrificans (strain ATCC 33889 / DSM 1251) (Thiomicrospira denitrificans (strain ATCC 33889 / DSM 1251))).